The primary structure comprises 575 residues: Beta-amylase 1, chloroplastic (575 aa).

The N-terminal 41 residues, M1–K41, are a transit peptide targeting the chloroplast. Phosphoserine occurs at positions 55 and 59. C73 and C511 are joined by a disulfide. Substrate is bound by residues D147, H187, and D195. Residue E279 is the Proton donor of the active site. Positions 392, 397, and 439 each coordinate substrate. Catalysis depends on E477, which acts as the Proton acceptor. Residues N478 to A479 and R517 contribute to the substrate site.

Belongs to the glycosyl hydrolase 14 family. As to expression, expressed in leaves, roots, flowers, pollen, and seeds.

It localises to the plastid. It is found in the chloroplast. The catalysed reaction is Hydrolysis of (1-&gt;4)-alpha-D-glucosidic linkages in polysaccharides so as to remove successive maltose units from the non-reducing ends of the chains.. Its activity is regulated as follows. Redox regulation; active in reducing conditions, inactive in oxidizing conditions. Thioredoxins f1, m1, and y1 mediate the reversible reductive activation of oxidized BAM1. Functionally, beta-amylase activity. Can use p-nitrophenyl maltopentaoside (PNPG5) as substrate only in reduced form. Can play a minor role in the starch degradation and maltose metabolism in chloroplasts during the night. More active on phosphorylated glucan. Interacts directly with starch or other alpha-1,4-glucan. In Arabidopsis thaliana (Mouse-ear cress), this protein is Beta-amylase 1, chloroplastic (BAM1).